The primary structure comprises 390 residues: Succinate--CoA ligase [ADP-forming] subunit beta (390 aa).

In terms of domain architecture, ATP-grasp spans 9-248; that stretch reads KDILRKFGVS…ISEEDPFEVE (240 aa). ATP contacts are provided by residues Lys-50, 57-59, Glu-103, Met-106, and Glu-111; that span reads GRG. Mg(2+) contacts are provided by Asn-203 and Asp-217. Substrate is bound by residues Asn-268 and 325-327; that span reads GIV.

It belongs to the succinate/malate CoA ligase beta subunit family. In terms of assembly, heterotetramer of two alpha and two beta subunits. The cofactor is Mg(2+).

The catalysed reaction is succinate + ATP + CoA = succinyl-CoA + ADP + phosphate. It carries out the reaction GTP + succinate + CoA = succinyl-CoA + GDP + phosphate. It participates in carbohydrate metabolism; tricarboxylic acid cycle; succinate from succinyl-CoA (ligase route): step 1/1. Its function is as follows. Succinyl-CoA synthetase functions in the citric acid cycle (TCA), coupling the hydrolysis of succinyl-CoA to the synthesis of either ATP or GTP and thus represents the only step of substrate-level phosphorylation in the TCA. The beta subunit provides nucleotide specificity of the enzyme and binds the substrate succinate, while the binding sites for coenzyme A and phosphate are found in the alpha subunit. This is Succinate--CoA ligase [ADP-forming] subunit beta from Prosthecochloris aestuarii (strain DSM 271 / SK 413).